The chain runs to 506 residues: 26S proteasome non-ATPase regulatory subunit 5 (506 aa).

This sequence belongs to the proteasome subunit S5B/HSM3 family. In terms of assembly, interacts with PI31; this interaction is increased by PI31 ADP-ribosylation. Interacts with Rpt2.

Its function is as follows. Acts as a chaperone during the assembly of the 26S proteasome. The protein is 26S proteasome non-ATPase regulatory subunit 5 of Drosophila melanogaster (Fruit fly).